The sequence spans 596 residues: 3-hydroxy-3-methylglutaryl-coenzyme A reductase 1 (596 aa).

The interval 1–29 (MDVRRRPVKPLYTSKDASAGEPLKQQEVS) is disordered. The next 2 membrane-spanning stretches (helical) occupy residues 41-61 (LYLT…FLLV) and 83-103 (AMVS…IGFV). The tract at residues 104-183 (QSFVSRSNSD…SPIIMPALSE (80 aa)) is linker. Positions 184-596 (DDEEIIQSVV…YNRSIKDISK (413 aa)) are catalytic. E278 (charge relay system) is an active-site residue. A glycan (N-linked (GlcNAc...) asparagine) is linked at N342. K410 functions as the Charge relay system in the catalytic mechanism. A glycan (N-linked (GlcNAc...) asparagine) is linked at N455. The active-site Charge relay system is D486. The Proton donor role is filled by H584. The N-linked (GlcNAc...) asparagine glycan is linked to N588.

It belongs to the HMG-CoA reductase family. As to expression, expressed in flower primordia and anthers.

It localises to the endoplasmic reticulum membrane. It catalyses the reaction (R)-mevalonate + 2 NADP(+) + CoA = (3S)-3-hydroxy-3-methylglutaryl-CoA + 2 NADPH + 2 H(+). Its pathway is metabolic intermediate biosynthesis; (R)-mevalonate biosynthesis; (R)-mevalonate from acetyl-CoA: step 3/3. Functionally, catalyzes the synthesis of mevalonate. The specific precursor of all isoprenoid compounds present in plants. The sequence is that of 3-hydroxy-3-methylglutaryl-coenzyme A reductase 1 (HMG1) from Solanum tuberosum (Potato).